The following is a 267-amino-acid chain: Trehalose-phosphate phosphatase (267 aa).

Residue D20 is the Nucleophile of the active site. D20, D22, and D198 together coordinate Mg(2+). A substrate-binding site is contributed by 20–22 (DLD).

Belongs to the trehalose phosphatase family. Mg(2+) is required as a cofactor.

The enzyme catalyses alpha,alpha-trehalose 6-phosphate + H2O = alpha,alpha-trehalose + phosphate. Its pathway is glycan biosynthesis; trehalose biosynthesis. In terms of biological role, removes the phosphate from trehalose 6-phosphate to produce free trehalose. The protein is Trehalose-phosphate phosphatase (otsB) of Salmonella typhimurium (strain LT2 / SGSC1412 / ATCC 700720).